The primary structure comprises 341 residues: Fructose-1,6-bisphosphatase, cytosolic (341 aa).

Positions 71, 100, 121, 123, and 124 each coordinate Mg(2+). Residues 124 to 127 (DGSF), asparagine 215, tyrosine 247, tyrosine 267, and lysine 277 each bind substrate. Residue glutamate 283 coordinates Mg(2+).

The protein belongs to the FBPase class 1 family. The cofactor is Mg(2+).

It is found in the cytoplasm. It carries out the reaction beta-D-fructose 1,6-bisphosphate + H2O = beta-D-fructose 6-phosphate + phosphate. The chain is Fructose-1,6-bisphosphatase, cytosolic from Pisum sativum (Garden pea).